Reading from the N-terminus, the 651-residue chain is MATTQPCLIGQIIAVPQFHILFSPRNSLKPELSTNKRTNFSVSIGLRHSFASSISTCNPKAPSLSCLRNCAAVDGADTSSSEDKWDWDWDRWNRHFSEIEEVESVVSLLKSQLEDAVEKEDFEEAVKLKQAISEATVDDAVAEIMRQLQTAVNEERYHDASRLCNETGSGLVGWWVGLPRDSEEPFGRIVHITPGVGRFIGKSYSPRQLVAEAAGTPLFEIFVIKDTDGGYVMQVVYVQHVKQNLTISENSFSKVQQSSKSSINDPSILDVRGSELKVDKKEDTQLNAGEPTEEGIKNVIKFLKDKIPGLKLKVMDVIKIPEEEIVGSDDATEELVGEGTEETNSSDDEEEVEEEENDSIEAISSMDSADYGKHSNTKLVIGGVLHNIEDSSIDDEIVRVSANIMDTERDSFILHVPGRSKRDIDTRKNRVSKEQVTALAAQGLSDLLPPEVAEAFWGEKASLKVSKHVHEIVKLAINQAQKGNHLSEYTAFNRIITPESNLDPFDGLYVGAFGPYGTEIVQLKRKYGRWDDAEGSNSSDIEFFEYVEAVKLTGDPNVPAGQVTFRARIGNGSRMTNHGLFPEELGVLASYRGQGKIADFGFKKPRWVEGKLLKLNGKGMGPYVKGADLGFLYIGPEQSFLVLFNRLRLPE.

The N-terminal 69 residues, 1–69 (MATTQPCLIG…KAPSLSCLRN (69 aa)), are a transit peptide targeting the chloroplast. The UVR domain maps to 103–138 (ESVVSLLKSQLEDAVEKEDFEEAVKLKQAISEATVD). The tract at residues 330–359 (DATEELVGEGTEETNSSDDEEEVEEEENDS) is disordered.

It is found in the plastid. The protein resides in the chloroplast. In terms of biological role, together with EX1, enables higher plants to perceive singlet oxygen as a stress signal in plastid that activates a genetically determined nuclear stress response program which triggers a programmed cell death (PCD). This transfer of singlet oxygen-induced stress-related signals from the plastid to the nucleus that triggers genetically controlled PCD pathway is unique to photosynthetic eukaryotes and operates under mild stress conditions, impeding photosystem II (PSII) without causing photooxidative damage of the plant. The chain is Protein EXECUTER 2, chloroplastic from Arabidopsis thaliana (Mouse-ear cress).